The sequence spans 871 residues: DNA mismatch repair protein MutS (871 aa).

621–628 (GPNMAGKS) contributes to the ATP binding site.

The protein belongs to the DNA mismatch repair MutS family.

In terms of biological role, this protein is involved in the repair of mismatches in DNA. It is possible that it carries out the mismatch recognition step. This protein has a weak ATPase activity. This Geobacter sulfurreducens (strain ATCC 51573 / DSM 12127 / PCA) protein is DNA mismatch repair protein MutS.